The sequence spans 352 residues: MTIAIGKPEEKTSWFDKVDDWVRRDRFVFVGWSGLLLFPTAYLALGGWLTGTTFVTSWYTHGLASSYLEGCNFLTAAVSTPANSLGHSLLLLWGPEAQGDLTRWFQLGGLWTFVALHGAFALIGFMLRQFEIARSVKLRPYNAIAFSAPISVFVSVFLIYPLGQSGWFFAPSFGVAAIFRFILFFQGFHNWTLNPFHMMGVAGVLGAALLCAIHGATVENTLFEDGDGANTFRAFNPTQAEETYSMVTANRFWSQIFGVAFSNKRWLHFFMLFVPVTGLWMSALGVVGLALNLRAYDFVSQEIRAAEDPEFETFYTKNILLNEGIRAWMAAQDQPHEKLVFPEEVLPRGNAL.

T2 is subject to N-acetylthreonine. T2 carries the post-translational modification Phosphothreonine. A helical membrane pass occupies residues T40 to T60. H117 contacts chlorophyll a. The helical transmembrane segment at G124 to P140 threads the bilayer. Residues Q129 and N142 each coordinate pheophytin a. The helical transmembrane segment at V152–S165 threads the bilayer. H197 contributes to the chlorophyll a binding site. The chain crosses the membrane as a helical span at residues A207 to D227. A plastoquinone is bound by residues H214 and F261. H214 is a Fe cation binding site. H268 serves as a coordination point for Fe cation. The helical transmembrane segment at G278–R294 threads the bilayer.

Belongs to the reaction center PufL/M/PsbA/D family. As to quaternary structure, PSII is composed of 1 copy each of membrane proteins PsbA, PsbB, PsbC, PsbD, PsbE, PsbF, PsbH, PsbI, PsbJ, PsbK, PsbL, PsbM, PsbT, PsbX, PsbY, PsbZ, Psb30/Ycf12, at least 3 peripheral proteins of the oxygen-evolving complex and a large number of cofactors. It forms dimeric complexes. The D1/D2 heterodimer binds P680, chlorophylls that are the primary electron donor of PSII, and subsequent electron acceptors. It shares a non-heme iron and each subunit binds pheophytin, quinone, additional chlorophylls, carotenoids and lipids. There is also a Cl(-1) ion associated with D1 and D2, which is required for oxygen evolution. The PSII complex binds additional chlorophylls, carotenoids and specific lipids. serves as cofactor.

Its subcellular location is the plastid. The protein localises to the chloroplast thylakoid membrane. The enzyme catalyses 2 a plastoquinone + 4 hnu + 2 H2O = 2 a plastoquinol + O2. Functionally, photosystem II (PSII) is a light-driven water:plastoquinone oxidoreductase that uses light energy to abstract electrons from H(2)O, generating O(2) and a proton gradient subsequently used for ATP formation. It consists of a core antenna complex that captures photons, and an electron transfer chain that converts photonic excitation into a charge separation. The D1/D2 (PsbA/PsbD) reaction center heterodimer binds P680, the primary electron donor of PSII as well as several subsequent electron acceptors. D2 is needed for assembly of a stable PSII complex. In Pleurastrum terricola (Filamentous green alga), this protein is Photosystem II D2 protein.